The primary structure comprises 544 residues: Carboxypeptidase Y homolog A (544 aa).

The first 17 residues, 1 to 17 (MKSLALALLVGGAIASG), serve as a signal peptide directing secretion. Positions 18–124 (PQQQVLREPV…RLDTYDLRVK (107 aa)) are excised as a propeptide. Disulfide bonds link C178-C417, C312-C326, C336-C359, C343-C352, and C381-C387. N209 carries an N-linked (GlcNAc...) asparagine glycan. S265 is an active-site residue. Residue D456 is part of the active site. N506 carries an N-linked (GlcNAc...) asparagine glycan. Residue H517 is part of the active site.

It belongs to the peptidase S10 family.

It localises to the vacuole. The enzyme catalyses Release of a C-terminal amino acid with broad specificity.. Its function is as follows. Vacuolar carboxypeptidase involved in degradation of small peptides. Digests preferentially peptides containing an aliphatic or hydrophobic residue in P1' position, as well as methionine, leucine or phenylalanine in P1 position of ester substrate. This Ajellomyces capsulatus (strain G186AR / H82 / ATCC MYA-2454 / RMSCC 2432) (Darling's disease fungus) protein is Carboxypeptidase Y homolog A (CPYA).